A 125-amino-acid chain; its full sequence is MADLAKIVDDLSKLTVLEAAELSKLLEEKWGVSAAAPVAVAAAGGAAAAAAPAEEKTEFDVVLTDAGAQKINVIKEVRAITGLGLKEAKDLVEAAPKPVKEGVSKADADKFKAQLEAAGAKVDLK.

The protein belongs to the bacterial ribosomal protein bL12 family. As to quaternary structure, homodimer. Part of the ribosomal stalk of the 50S ribosomal subunit. Forms a multimeric L10(L12)X complex, where L10 forms an elongated spine to which 2 to 4 L12 dimers bind in a sequential fashion. Binds GTP-bound translation factors.

Forms part of the ribosomal stalk which helps the ribosome interact with GTP-bound translation factors. Is thus essential for accurate translation. The protein is Large ribosomal subunit protein bL12 of Mesorhizobium japonicum (strain LMG 29417 / CECT 9101 / MAFF 303099) (Mesorhizobium loti (strain MAFF 303099)).